The primary structure comprises 404 residues: Protein ORF23 (404 aa).

This sequence belongs to the lymphocryptovirus BTRF1 family. Interacts with ORF34.

Its subcellular location is the host nucleus. It localises to the host cytoplasm. Functionally, plays a role in the expression of late genes. The protein is Protein ORF23 (ORF23) of Homo sapiens (Human).